A 1842-amino-acid chain; its full sequence is Plexin-B2 (1842 aa).

Residues 1–19 form the signal peptide; that stretch reads MALPLWALTFLGLTGLGLS. Residues 20–468 form the Sema domain; it reads LRSRKPESFR…TQDKVFRLPV (449 aa). Topologically, residues 20 to 1201 are extracellular; that stretch reads LRSRKPESFR…EYDTRASDVP (1182 aa). Cystine bridges form between C78–C87 and C112–C120. N-linked (GlcNAc...) asparagine glycans are attached at residues N127 and N242. 3 cysteine pairs are disulfide-bonded: C250–C366, C266–C313, and C331–C353. 2 N-linked (GlcNAc...) asparagine glycosylation sites follow: N393 and N451. 5 disulfides stabilise this stretch: C471–C488, C477–C520, C480–C497, C491–C503, and C557–C576. N-linked (GlcNAc...) asparagine glycosylation occurs at N798. 3 consecutive IPT/TIG domains span residues 806 to 895, 898 to 982, and 986 to 1095; these read PVIT…QFTY, PQPL…SFTY, and PMIR…VFEY. Residues N919, N1053, and N1072 are each glycosylated (N-linked (GlcNAc...) asparagine). The chain crosses the membrane as a helical span at residues 1202–1222; that stretch reads LSLILPLVMVPMVFIIVVSIY. At 1223–1842 the chain is on the cytoplasmic side; the sequence is CYWRKSQQAE…AALENKVTDL (620 aa). Phosphoserine occurs at positions 1240, 1248, and 1574.

This sequence belongs to the plexin family. In terms of assembly, monomer, and heterodimer with PLXNB1. Interacts with MET, ARHGEF11 and ARHGEF12. May also interact with MST1R. In terms of tissue distribution, detected in macrophages from spleen and bone marrow (at protein level). Detected in granule cells in the developing cerebellum, dentate gyrus and olfactory bulb. Expressed in neurons and glia in the developing hippocampus.

Its subcellular location is the cell membrane. Its function is as follows. Cell surface receptor for SEMA4C, SEMA4D and SEMA4G that plays an important role in cell-cell signaling. Plays a role in glutamatergic synapse development and is required for SEMA4A-mediated excitatory synapse development. Binding to class 4 semaphorins promotes downstream activation of RHOA and phosphorylation of ERBB2 at 'Tyr-1248'. Also acts as a cell surface receptor for angiogenin (ANG); promoting ANG endocytosis and translocation to the cytoplasm or nucleus. Required for normal differentiation and migration of neuronal cells during brain corticogenesis and for normal embryonic brain development. Regulates the migration of cerebellar granule cells in the developing brain. Plays a role in RHOA activation and subsequent changes of the actin cytoskeleton. Plays a role in axon guidance, invasive growth and cell migration. May modulate the activity of RAC1 and CDC42. Down-regulates macrophage migration in wound-healing assays (in vitro). This Mus musculus (Mouse) protein is Plexin-B2.